Here is a 301-residue protein sequence, read N- to C-terminus: Inosose dehydratase (301 aa).

This sequence belongs to the IolE/MocC family. It depends on glutathione as a cofactor. Co(2+) serves as cofactor. The cofactor is Mn(2+).

It catalyses the reaction scyllo-inosose = 3D-3,5/4-trihydroxycyclohexane-1,2-dione + H2O. It participates in polyol metabolism; myo-inositol degradation into acetyl-CoA; acetyl-CoA from myo-inositol: step 2/7. Functionally, catalyzes the dehydration of inosose (2-keto-myo-inositol, 2KMI or 2,4,6/3,5-pentahydroxycyclohexanone) to 3D-(3,5/4)-trihydroxycyclohexane-1,2-dione (D-2,3-diketo-4-deoxy-epi-inositol). The sequence is that of Inosose dehydratase from Lacticaseibacillus casei (strain BL23) (Lactobacillus casei).